Reading from the N-terminus, the 270-residue chain is Release factor glutamine methyltransferase (270 aa).

S-adenosyl-L-methionine-binding positions include Gly-113 to Gly-117, Asp-136, and Asn-177. Asn-177–Tyr-180 contributes to the substrate binding site.

Belongs to the protein N5-glutamine methyltransferase family. PrmC subfamily.

It catalyses the reaction L-glutaminyl-[peptide chain release factor] + S-adenosyl-L-methionine = N(5)-methyl-L-glutaminyl-[peptide chain release factor] + S-adenosyl-L-homocysteine + H(+). Its function is as follows. Methylates the class 1 translation termination release factors RF1/PrfA and RF2/PrfB on the glutamine residue of the universally conserved GGQ motif. In Lactococcus lactis subsp. lactis (strain IL1403) (Streptococcus lactis), this protein is Release factor glutamine methyltransferase.